We begin with the raw amino-acid sequence, 291 residues long: ATP synthase gamma chain (291 aa).

It belongs to the ATPase gamma chain family. F-type ATPases have 2 components, CF(1) - the catalytic core - and CF(0) - the membrane proton channel. CF(1) has five subunits: alpha(3), beta(3), gamma(1), delta(1), epsilon(1). CF(0) has three main subunits: a, b and c.

The protein localises to the cell inner membrane. In terms of biological role, produces ATP from ADP in the presence of a proton gradient across the membrane. The gamma chain is believed to be important in regulating ATPase activity and the flow of protons through the CF(0) complex. This Pelodictyon phaeoclathratiforme (strain DSM 5477 / BU-1) protein is ATP synthase gamma chain.